Here is a 331-residue protein sequence, read N- to C-terminus: ESX-3 secretion system protein EccE3 (331 aa).

A run of 2 helical transmembrane segments spans residues 11 to 31 and 37 to 57; these read GRVT…PWQS and LLGV…GLYF.

Belongs to the EccE family. Part of the ESX-3 / type VII secretion system (T7SS), which is composed of cytosolic and membrane components. The ESX-3 membrane complex is composed of EccB3, EccC3, EccD3 and EccE3.

It localises to the cell inner membrane. Functionally, part of the ESX-3 specialized secretion system, which is important for iron and zinc uptake or homeostasis. This is ESX-3 secretion system protein EccE3 from Mycobacterium tuberculosis (strain ATCC 25618 / H37Rv).